Reading from the N-terminus, the 264-residue chain is Ribosomal RNA small subunit methyltransferase A (264 aa).

S-adenosyl-L-methionine-binding residues include N15, I17, G42, E64, D90, and N109.

Belongs to the class I-like SAM-binding methyltransferase superfamily. rRNA adenine N(6)-methyltransferase family. RsmA subfamily.

Its subcellular location is the cytoplasm. It carries out the reaction adenosine(1518)/adenosine(1519) in 16S rRNA + 4 S-adenosyl-L-methionine = N(6)-dimethyladenosine(1518)/N(6)-dimethyladenosine(1519) in 16S rRNA + 4 S-adenosyl-L-homocysteine + 4 H(+). In terms of biological role, specifically dimethylates two adjacent adenosines (A1518 and A1519) in the loop of a conserved hairpin near the 3'-end of 16S rRNA in the 30S particle. May play a critical role in biogenesis of 30S subunits. This chain is Ribosomal RNA small subunit methyltransferase A, found in Wolbachia pipientis subsp. Culex pipiens (strain wPip).